The chain runs to 138 residues: Putative nickel-responsive regulator (138 aa).

Positions 76, 87, 89, and 95 each coordinate Ni(2+).

It belongs to the transcriptional regulatory CopG/NikR family. Ni(2+) serves as cofactor.

Transcriptional regulator. The polypeptide is Putative nickel-responsive regulator (Pseudomonas putida (strain W619)).